The chain runs to 622 residues: Serine/threonine-protein kinase MAK (622 aa).

The Protein kinase domain maps to tyrosine 4 to phenylalanine 284. ATP is bound by residues leucine 10–valine 18 and lysine 33. The active-site Proton acceptor is aspartate 125. Residue threonine 157 is modified to Phosphothreonine; by autocatalysis. Tyrosine 159 carries the phosphotyrosine; by autocatalysis modification. The disordered stretch occupies residues glutamine 301–methionine 371. The segment covering glutamine 336–threonine 355 has biased composition (polar residues).

It belongs to the protein kinase superfamily. CMGC Ser/Thr protein kinase family. CDC2/CDKX subfamily. In terms of assembly, interacts with AR and CDK20. Found in a complex containing MAK, AR and NCOA3. Interacts with FZR1 (via WD repeats). Interacts with RP1. Mg(2+) is required as a cofactor. In terms of processing, autophosphorylated. Phosphorylated on serine and threonine residues. In pre- and postmeiotic male germ cells in testis. In photoreceptor cells of the retina and in the olfactory receptors, and in certain epithelia of the respiratory tract and choroid plexus (brain).

It is found in the nucleus. It localises to the cytoplasm. Its subcellular location is the cytoskeleton. The protein resides in the microtubule organizing center. The protein localises to the centrosome. It is found in the spindle. It localises to the midbody. Its subcellular location is the cell projection. The protein resides in the cilium. The protein localises to the photoreceptor outer segment. It is found in the photoreceptor inner segment. It carries out the reaction L-seryl-[protein] + ATP = O-phospho-L-seryl-[protein] + ADP + H(+). The catalysed reaction is L-threonyl-[protein] + ATP = O-phospho-L-threonyl-[protein] + ADP + H(+). In terms of biological role, essential for the regulation of ciliary length and required for the long-term survival of photoreceptors. Could have an important function in sensory cells and in spermatogenesis. May participate in signaling pathways used in visual and olfactory sensory transduction. Phosphorylates FZR1 in a cell cycle-dependent manner. Plays a role in the transcriptional coactivation of AR. The chain is Serine/threonine-protein kinase MAK (Mak) from Mus musculus (Mouse).